A 242-amino-acid chain; its full sequence is Transcription factor TCP17 (242 aa).

Residues 33-91 (GKDRHSKVCTVRGLRDRRIRLSVMTAIQVYDLQERLGLSQPSKVIDWLLEVAKNDVDLL) enclose the TCP domain.

Interacts with SPL. As to expression, expressed in cotyledons, particularly in the vascular region, in leaves, roots, stems, buds, flowers and siliques.

It localises to the nucleus. Plays a pivotal role in the control of morphogenesis of shoot organs by negatively regulating the expression of boundary-specific genes such as CUC genes, probably through the induction of miRNA (e.g. miR164). Participates in ovule development. The protein is Transcription factor TCP17 (TCP17) of Arabidopsis thaliana (Mouse-ear cress).